The chain runs to 29 residues: Cytochrome b6-f complex subunit 8 (29 aa).

A helical transmembrane segment spans residues 3 to 23 (ILTLGWVSVLTLFTYSIAMVV).

It belongs to the PetN family. The 4 large subunits of the cytochrome b6-f complex are cytochrome b6, subunit IV (17 kDa polypeptide, PetD), cytochrome f and the Rieske protein, while the 4 small subunits are PetG, PetL, PetM and PetN. The complex functions as a dimer.

The protein localises to the cellular thylakoid membrane. Component of the cytochrome b6-f complex, which mediates electron transfer between photosystem II (PSII) and photosystem I (PSI), cyclic electron flow around PSI, and state transitions. This is Cytochrome b6-f complex subunit 8 from Acaryochloris marina (strain MBIC 11017).